A 462-amino-acid chain; its full sequence is NAD-capped RNA hydrolase NUDT12 (462 aa).

3 ANK repeats span residues 11–40 (EIVT…SLLN), 45–74 (NGWT…DRSI), and 78–98 (SRQT…ANLL). The residue at position 185 (Lys-185) is an N6-succinyllysine. Cys-284 and Cys-287 together coordinate Zn(2+). The residue at position 292 (Lys-292) is an N6-succinyllysine. Zn(2+)-binding residues include Cys-302 and Cys-307. Substrate contacts are provided by residues Tyr-318, 354–356 (AGF), Glu-370, Glu-374, and Glu-415. In terms of domain architecture, Nudix hydrolase spans 319-453 (PRVDPVVIMQ…SRAIAHQLIK (135 aa)). Ala-354, Glu-370, Glu-374, and Glu-415 together coordinate Mg(2+). The Nudix box motif lies at 355–376 (GFIEPGETIEDAVRREVEEESG). Positions 460–462 (PNL) match the Microbody targeting signal motif.

This sequence belongs to the Nudix hydrolase family. NudC subfamily. Homodimer. Homodimerization is essential for its catalytic activity and protein stability. Interacts (via ANK repeats) with BLMH. It depends on Mg(2+) as a cofactor. Zn(2+) serves as cofactor.

The protein resides in the cytoplasm. The protein localises to the peroxisome. It localises to the cytoplasmic granule. It catalyses the reaction a 5'-end NAD(+)-phospho-ribonucleoside in mRNA + H2O = a 5'-end phospho-adenosine-phospho-ribonucleoside in mRNA + beta-nicotinamide D-ribonucleotide + 2 H(+). The catalysed reaction is NAD(+) + H2O = beta-nicotinamide D-ribonucleotide + AMP + 2 H(+). It carries out the reaction NADH + H2O = reduced beta-nicotinamide D-ribonucleotide + AMP + 2 H(+). The enzyme catalyses NADPH + H2O = reduced beta-nicotinamide D-ribonucleotide + adenosine 2',5'-bisphosphate + 2 H(+). Functionally, mRNA decapping enzyme that specifically removes the nicotinamide adenine dinucleotide (NAD) cap from a subset of mRNAs by hydrolyzing the diphosphate linkage to produce nicotinamide mononucleotide (NMN) and 5' monophosphate mRNA. The NAD-cap is present at the 5'-end of some RNAs; in contrast to the canonical N7 methylguanosine (m7G) cap, the NAD cap promotes mRNA decay. Preferentially acts on NAD-capped transcripts in response to nutrient stress. Also acts on free nicotinamide adenine dinucleotide molecules: hydrolyzes NAD(H) into NMN(H) and AMP, and NADPH into NMNH and 2',5'-ADP. May act to regulate the concentration of peroxisomal nicotinamide nucleotide cofactors required for oxidative metabolism in this organelle. Regulates the levels of circadian clock components PER1, PER2, PER3 and CRY2 in the liver. The sequence is that of NAD-capped RNA hydrolase NUDT12 from Pongo abelii (Sumatran orangutan).